A 164-amino-acid polypeptide reads, in one-letter code: Probable calcium-binding protein CML17 (164 aa).

4 consecutive EF-hand domains span residues 4-39 (DQQA…LGMP), 40-75 (VHRE…VMRV), 88-123 (VDEA…LGIK), and 126-161 (RTAE…GAFA). Ca(2+) contacts are provided by Asp-17, Asp-19, Asp-21, Arg-23, Glu-28, Asp-53, Asn-55, Asp-57, Cys-59, Glu-64, Asp-101, Asn-103, Asp-105, Glu-112, Asp-139, Asp-141, Asp-143, Arg-145, and Glu-150.

Potential calcium sensor. The chain is Probable calcium-binding protein CML17 (CML17) from Oryza sativa subsp. japonica (Rice).